Reading from the N-terminus, the 132-residue chain is Small ribosomal subunit protein uS9 (132 aa).

Belongs to the universal ribosomal protein uS9 family.

This is Small ribosomal subunit protein uS9 from Blochmanniella pennsylvanica (strain BPEN).